Consider the following 87-residue polypeptide: RNA-binding protein Hfq (87 aa).

One can recognise a Sm domain in the interval 9–68 (DPYLNVLRKERIPVSIYLVNGIKLQGQVESFDQFVVLLKNTVSQMVYKHAISTVVPSRPV).

This sequence belongs to the Hfq family. In terms of assembly, homohexamer.

Functionally, RNA chaperone that binds small regulatory RNA (sRNAs) and mRNAs to facilitate mRNA translational regulation in response to envelope stress, environmental stress and changes in metabolite concentrations. Also binds with high specificity to tRNAs. This is RNA-binding protein Hfq from Teredinibacter turnerae (strain ATCC 39867 / T7901).